We begin with the raw amino-acid sequence, 1030 residues long: MMS19 nucleotide excision repair protein homolog (1030 aa).

Alanine 2 is modified (N-acetylalanine). 4 HEAT repeats span residues 866–904, 908–946, 949–987, and 990–1028; these read QRFF…RLPK, LPEL…EAPQ, SLHV…LPTP, and LPYK…LGSP. Residue serine 1027 is modified to Phosphoserine.

Belongs to the MET18/MMS19 family. As to quaternary structure, component of the CIA complex. In the CIA complex, interacts directly with CIAO2B and CIAO3. Component of the MMXD complex, composed of CIAO1, ERCC2, CIAO2B, MMS19 and SLC25A5. Interacts with CIAO2B; the interaction is direct. Interacts with ERCC2/XPD; the interaction is direct. Interacts with ERCC3/XPB and NCOA3/RAC3. Interacts with RTEL1; the interaction mediates the association of RTEL1 with the CIA complex. Interacts with BRIP1. Interacts with KIF4A; the interaction facilitates the transfer of Fe-S clusters to KIF4A to ensure proper localization of KIF4A to the mitotic machinery components. Interacts with CCDC117; the interaction is indirect. Ubiquitinated; undergoes 'Lys-48'-linked polyubiquitination.

The protein localises to the nucleus. The protein resides in the cytoplasm. It is found in the cytoskeleton. Its subcellular location is the spindle. Its function is as follows. Key component of the cytosolic iron-sulfur protein assembly (CIA) complex, a multiprotein complex that mediates the incorporation of iron-sulfur cluster into apoproteins specifically involved in DNA metabolism and genomic integrity. In the CIA complex, MMS19 acts as an adapter between early-acting CIA components and a subset of cellular target Fe/S proteins such as ERCC2/XPD, FANCJ and RTEL1, thereby playing a key role in nucleotide excision repair (NER), homologous recombination-mediated double-strand break DNA repair, DNA replication and RNA polymerase II (POL II) transcription. As a CIA complex component and in collaboration with CIAO1 and CIAO2, binds to and facilitates the assembly of most cytosolic-nuclear Fe/S proteins. As part of the mitotic spindle-associated MMXD complex, plays a role in chromosome segregation, probably by facilitating iron-sulfur cluster assembly into ERCC2/XPD. Together with CIAO2, facilitates the transfer of Fe-S clusters to the motor protein KIF4A, which ensures proper localization of KIF4A to mitotic machinery components to promote the progression of mitosis. Indirectly acts as a transcriptional coactivator of estrogen receptor (ER), via its role in iron-sulfur insertion into some component of the TFIIH-machinery. This Bos taurus (Bovine) protein is MMS19 nucleotide excision repair protein homolog.